The sequence spans 384 residues: 8-amino-7-oxononanoate synthase (384 aa).

Residue arginine 21 participates in substrate binding. Residue 108–109 participates in pyridoxal 5'-phosphate binding; it reads GF. A substrate-binding site is contributed by histidine 133. Pyridoxal 5'-phosphate-binding residues include serine 179, histidine 207, and threonine 233. Lysine 236 carries the N6-(pyridoxal phosphate)lysine modification. Threonine 352 contributes to the substrate binding site.

The protein belongs to the class-II pyridoxal-phosphate-dependent aminotransferase family. BioF subfamily. Homodimer. Pyridoxal 5'-phosphate serves as cofactor.

It catalyses the reaction 6-carboxyhexanoyl-[ACP] + L-alanine + H(+) = (8S)-8-amino-7-oxononanoate + holo-[ACP] + CO2. The protein operates within cofactor biosynthesis; biotin biosynthesis. Its function is as follows. Catalyzes the decarboxylative condensation of pimeloyl-[acyl-carrier protein] and L-alanine to produce 8-amino-7-oxononanoate (AON), [acyl-carrier protein], and carbon dioxide. In Escherichia coli O6:H1 (strain CFT073 / ATCC 700928 / UPEC), this protein is 8-amino-7-oxononanoate synthase.